The sequence spans 153 residues: Large ribosomal subunit protein uL15 (153 aa).

Basic residues predominate over residues 1-40; the sequence is MTDKKRRQRGSRTHGGGTHKNRRGAGNRGGRGRAGRKKHE. Residues 1–60 are disordered; the sequence is MTDKKRRQRGSRTHGGGTHKNRRGAGNRGGRGRAGRKKHEQHNYEDVGKSGFKRPEKTDR. Basic and acidic residues predominate over residues 41 to 60; it reads QHNYEDVGKSGFKRPEKTDR.

Belongs to the universal ribosomal protein uL15 family. Part of the 50S ribosomal subunit.

Binds to the 23S rRNA. This is Large ribosomal subunit protein uL15 from Halobacterium salinarum (strain ATCC 29341 / DSM 671 / R1).